Here is a 389-residue protein sequence, read N- to C-terminus: Probable nitrate transporter NarT (389 aa).

The next 12 membrane-spanning stretches (helical) occupy residues 14–34 (TLSL…MPFI), 45–65 (ISII…PFGY), 69–89 (IVGA…PIFF), 97–117 (GMLM…SVGV), 139–159 (GNIG…IIGW), 161–181 (TTVR…FIFG), 211–231 (WYFI…NYLV), 246–266 (GVFI…GDKF), 268–288 (AVKV…ILGI), 294–314 (LFTV…GLIF), 331–351 (IVSM…TYVA), and 353–373 (LTGS…IALF).

Belongs to the major facilitator superfamily. Nitrate/nitrite porter (TC 2.A.1.8) family.

It localises to the cell membrane. In terms of biological role, probably required for nitrate uptake under anoxic conditions. Also possibly involved in excretion of nitrite produced by the dissimilatory reduction of nitrate. In Staphylococcus aureus (strain MRSA252), this protein is Probable nitrate transporter NarT (narT).